Consider the following 306-residue polypeptide: Diterpene cyclase eriG (306 aa).

A run of 2 helical transmembrane segments spans residues 13–33 (IFFG…SIFA) and 43–63 (ATLV…IYFF). N64 is a glycosylation site (N-linked (GlcNAc...) asparagine). Transmembrane regions (helical) follow at residues 115–135 (FLPE…TSYG), 161–181 (IAPA…WAGL), 213–233 (LIIT…AGIF), and 265–285 (MFYT…GLGL).

This sequence belongs to the UbiA prenyltransferase family. Mg(2+) serves as cofactor.

The protein resides in the membrane. The catalysed reaction is (2E,6E,10E)-geranylgeranyl diphosphate = (-)-cyatha-3,12-diene + diphosphate. Its pathway is secondary metabolite biosynthesis. EDTA completely blocks the reaction. In terms of biological role, diterpene cyclase; part of the gene cluster that mediates the biosynthesis of erinacines, cyathane-xylosides that show unique biological activities, including leishmanicidal activity, stimulating activity for nerve growth-factor synthesis, and agonistic activity toward the kappa opioid receptor. Within the pathway, eriG acts as a diterpene cyclase that converts geranylgeranyl diphosphate (GGPP) into cyatha-3,12-diene. EriG is unable to use geranyl diphosphate (GPP) or farnesyl diphosphate (FPP) as substrates. The first step of the erinacines biosynthesis pathway is catalyzed by the geranylgeranyl diphosphate (GGPP) synthase eriE via conversion of farnesyl pyrophosphate and isopentyl pyrophosphate into geranylgeranyl pyrophosphate (GGPP). GGPP is then substrate of the diterpene cyclase eriG for the production of cyatha-3,12-diene. The cytochrome P450 monooxygenase eriI then hydroxylates cyatha-3,12-diene at C-14 of the seven-membered ring to produce erinacol, which is further hydroxylated at C-15 by the cytochrome P450 monooxygenase eriC to yield cyathadiol. The cytochrome P450 monooxygenase eriA then catalyzes C-11 hydroxylation in the presence of the short chain dehydrogenase/reductase (SDR) eriH, which leads to the production of cyathatriol. The acetyltransferase eriL converts cyathatriol into 11-O-acetyl-cyathatriol. The SDR eriH catalyzes further oxidation of 11-O-acetyl-cyathatriol into 1-O-acetylcyathin A3. Finally, the glycosyl transferase eriJ tranfers xylose from UDP-xylose onto C-14 of 11-O-acetyl-cyathatriol to form eracine Q. EriJ is also able to convert 11-O-acetyl-cyathatriol to eracine Q2 by using UDP-D-glucose as cosubstrate, but at a lower rate. This is Diterpene cyclase eriG from Hericium erinaceus (Lion's mane mushroom).